The following is a 285-amino-acid chain: Seed agglutinin 2 (285 aa).

An N-terminal signal peptide occupies residues 1 to 31 (MASYKFKTQNSFLLLLSISFFFLLLLNKVNS). N-linked (GlcNAc...) asparagine glycosylation is present at N147. Residues E156 and D158 each coordinate Mn(2+). Ca(2+)-binding residues include D158, N162, and D166. 2 residues coordinate Mn(2+): D166 and H171.

This sequence belongs to the leguminous lectin family. In terms of assembly, homotetramer. In terms of processing, mostly found in non-glycosylated form. In terms of tissue distribution, expressed in seed.

Functionally, seed lectin. This Robinia pseudoacacia (Black locust) protein is Seed agglutinin 2.